The primary structure comprises 245 residues: Protein-glutamine gamma-glutamyltransferase (245 aa).

This sequence belongs to the bacillus TGase family.

The catalysed reaction is L-glutaminyl-[protein] + L-lysyl-[protein] = [protein]-L-lysyl-N(6)-5-L-glutamyl-[protein] + NH4(+). Its function is as follows. Probably plays a role in the assembly of the spore coat proteins by catalyzing epsilon-(gamma-glutamyl)lysine cross-links. In wild-type spores at 37 degrees Celsius, tgl mediates the cross-linking of GerQ in higher molecular mass forms, probably in cooperation with YabG. This chain is Protein-glutamine gamma-glutamyltransferase (tgl), found in Bacillus subtilis (strain 168).